A 253-amino-acid polypeptide reads, in one-letter code: RBPJ-interacting and tubulin-associated protein 1 (253 aa).

Disordered regions lie at residues S30–Y89, T127–P175, and H188–K253. A compositionally biased stretch (polar residues) spans S71–L81. The short motif at L81–S97 is the Nuclear localization signal element. The tract at residues R112–P140 is interaction with RBPJ/RBPSUH. Positions P140–K253 are interaction with tubulin. Residues H188–A228 show a composition bias toward polar residues.

Belongs to the RITA family. Interacts with RBPJ/RBPSUH.

The protein localises to the cytoplasm. The protein resides in the nucleus. It is found in the cytoskeleton. Its subcellular location is the microtubule organizing center. It localises to the centrosome. Its function is as follows. Tubulin-binding protein that acts as a negative regulator of Notch signaling pathway. Shuttles between the cytoplasm and the nucleus and mediates the nuclear export of RBPJ/RBPSUH, thereby preventing the interaction between RBPJ/RBPSUH and NICD product of Notch proteins (Notch intracellular domain), leading to down-regulate Notch-mediated transcription. May play a role in neurogenesis. The chain is RBPJ-interacting and tubulin-associated protein 1 (Rita1) from Mus musculus (Mouse).